The chain runs to 376 residues: Chaperone protein DnaJ (376 aa).

The J domain maps to 5–69 (DYYEVLGISK…QKRAQYDQYG (65 aa)). Residues 133–215 (GKDAEIEIPR…CHGKGRVTKT (83 aa)) form a CR-type zinc finger. Residues C146, C149, C163, C166, C189, C192, C203, and C206 each contribute to the Zn(2+) site. CXXCXGXG motif repeat units follow at residues 146–153 (CDTCHGSG), 163–170 (CSHCGGKG), 189–196 (CQYCNGTG), and 203–210 (CPTCHGKG).

Belongs to the DnaJ family. In terms of assembly, homodimer. Zn(2+) serves as cofactor.

Its subcellular location is the cytoplasm. Participates actively in the response to hyperosmotic and heat shock by preventing the aggregation of stress-denatured proteins and by disaggregating proteins, also in an autonomous, DnaK-independent fashion. Unfolded proteins bind initially to DnaJ; upon interaction with the DnaJ-bound protein, DnaK hydrolyzes its bound ATP, resulting in the formation of a stable complex. GrpE releases ADP from DnaK; ATP binding to DnaK triggers the release of the substrate protein, thus completing the reaction cycle. Several rounds of ATP-dependent interactions between DnaJ, DnaK and GrpE are required for fully efficient folding. Also involved, together with DnaK and GrpE, in the DNA replication of plasmids through activation of initiation proteins. This Listeria monocytogenes serotype 4a (strain HCC23) protein is Chaperone protein DnaJ.